Reading from the N-terminus, the 84-residue chain is U4-theraphotoxin-Hhn1a (84 aa).

The first 22 residues, 1–22 (MKVTLIAILTCAAVLVLHTTAA), serve as a signal peptide directing secretion. The propeptide occupies 23-47 (EELEESQLMEVGMPDTELEAVDEER). Disulfide bonds link C51/C65, C55/C76, and C70/C81.

The protein belongs to the neurotoxin 12 (Hwtx-2) family. 02 (Hwtx-2) subfamily. As to expression, expressed by the venom gland.

Its subcellular location is the secreted. Postsynaptic neurotoxin. This Cyriopagopus hainanus (Chinese bird spider) protein is U4-theraphotoxin-Hhn1a.